A 253-amino-acid chain; its full sequence is Ubiquinone biosynthesis O-methyltransferase (253 aa).

The S-adenosyl-L-methionine site is built by arginine 47, glycine 78, aspartate 99, and methionine 141.

Belongs to the methyltransferase superfamily. UbiG/COQ3 family.

The enzyme catalyses a 3-demethylubiquinol + S-adenosyl-L-methionine = a ubiquinol + S-adenosyl-L-homocysteine + H(+). It carries out the reaction a 3-(all-trans-polyprenyl)benzene-1,2-diol + S-adenosyl-L-methionine = a 2-methoxy-6-(all-trans-polyprenyl)phenol + S-adenosyl-L-homocysteine + H(+). It functions in the pathway cofactor biosynthesis; ubiquinone biosynthesis. Its function is as follows. O-methyltransferase that catalyzes the 2 O-methylation steps in the ubiquinone biosynthetic pathway. The protein is Ubiquinone biosynthesis O-methyltransferase of Rhodopseudomonas palustris (strain ATCC BAA-98 / CGA009).